The sequence spans 237 residues: Ferritin, mitochondrial (237 aa).

The transit peptide at 1–49 (MLSCFWFFSKHISSALMSLPRVLHRFTAPQCLASRYPLGPLLASPRRLL) directs the protein to the mitochondrion. A Ferritin-like diiron domain is found at 66 to 215 (QNFHPDSEAA…DHVHNLVTMG (150 aa)). Residues E83, E118, H121, E163, and Q197 each contribute to the Fe cation site.

The protein belongs to the ferritin family. In terms of assembly, homooligomer of 24 subunits. The functional molecule is roughly spherical and contains a central cavity into which the polymeric mineral iron core is deposited.

The protein resides in the mitochondrion. It carries out the reaction 4 Fe(2+) + O2 + 4 H(+) = 4 Fe(3+) + 2 H2O. In terms of biological role, catalyzes the oxidation of ferrous iron(II) to ferric iron(III) and stores iron in a soluble, non-toxic, readily available form. Important for iron homeostasis. Iron is taken up in the ferrous form and deposited as ferric hydroxides after oxidation. The protein is Ferritin, mitochondrial of Mus musculus (Mouse).